The primary structure comprises 257 residues: 8-demethyl-8-aminoriboflavin-5'-phosphate synthase (257 aa).

Residues 11–13 (TLR), 19–21 (SQT), 91–94 (ITLN), 132–136 (CGNED), and Tyr-240 each bind FMN.

It belongs to the SsuE family. Homotetramer.

It carries out the reaction FMN + L-glutamate + 3 A + O2 + H2O = 8-amino-8-demethylriboflavin 5'-phosphate + 2-oxoglutarate + 3 AH2 + CO2 + H(+). It functions in the pathway antibiotic biosynthesis. Involved in the biosynthesis of the riboflavin analog antibiotic roseoflavin (3,8-dimethylamino-riboflavin). Catalyzes the site-specific substitution of the C-8 methyl group of riboflavin-5'-phosphate (FMN) by an amino group to yield 8-amino-8-demethylriboflavin 5'-phosphate, via a combined oxidation, decarboxylation and transamination reaction. The catalysis is initiated by an oxidation step in which the C-8 methyl group on the dimethylbenzene ring of FMN is converted to a formyl group to yield the 8-demethyl-8-formylriboflavin-5'-phosphate (OHC-RP) intermediate. In the presence of thiamine, the formyl group is oxidized into a carboxyl group to yield the 8-demethyl-8-carboxyriboflavin-5'-phosphate (HO2C-RP) intermediate. Finally, in the presence of L-glutamate as an amino donor, decarboxylation and aminotransfer occur, resulting in production of 8-demethyl-8-aminoriboflavin-5'-phosphate. Addition of NAD (but not NADP) to the reaction increases the yield 1.7-fold. The reaction also proceeds without the addition of any electron acceptor, and it is possible that molecular oxygen serves this role. This chain is 8-demethyl-8-aminoriboflavin-5'-phosphate synthase, found in Streptomyces davaonensis (strain DSM 101723 / JCM 4913 / KCC S-0913 / 768).